The following is a 277-amino-acid chain: NAD kinase (277 aa).

The active-site Proton acceptor is the Asp55. NAD(+) contacts are provided by residues 55 to 56 (DG), 131 to 132 (NE), Arg157, Asp159, and 170 to 175 (TAYNKS).

The protein belongs to the NAD kinase family. A divalent metal cation is required as a cofactor.

Its subcellular location is the cytoplasm. The catalysed reaction is NAD(+) + ATP = ADP + NADP(+) + H(+). Involved in the regulation of the intracellular balance of NAD and NADP, and is a key enzyme in the biosynthesis of NADP. Catalyzes specifically the phosphorylation on 2'-hydroxyl of the adenosine moiety of NAD to yield NADP. This chain is NAD kinase, found in Streptococcus mutans serotype c (strain ATCC 700610 / UA159).